The chain runs to 372 residues: N-methyl-L-tryptophan oxidase (372 aa).

4-34 is an FAD binding site; sequence DLIIIGSGSVGAAAGYYATRAGLNVLMTDAH. Cys-308 is modified (S-8alpha-FAD cysteine).

It belongs to the MSOX/MTOX family. MTOX subfamily. Monomer. It depends on FAD as a cofactor.

It catalyses the reaction N(alpha)-methyl-L-tryptophan + O2 + H2O = L-tryptophan + formaldehyde + H2O2. In terms of biological role, catalyzes the oxidative demethylation of N-methyl-L-tryptophan. The protein is N-methyl-L-tryptophan oxidase of Escherichia coli O81 (strain ED1a).